Consider the following 199-residue polypeptide: Protein PPP1R35 homolog (199 aa).

The segment covering 1 to 11 has biased composition (basic residues); that stretch reads MPHKRRNRVHA. Disordered regions lie at residues 1 to 23 and 36 to 60; these read MPHK…RVSV and ESCN…AMTN. A compositionally biased stretch (polar residues) spans 38–49; that stretch reads CNGSHADNSSPD.

This sequence belongs to the PPP1R35 family. As to quaternary structure, interacts with Ana3; this complex is recruited to daughter centrioles before their conversion to centrosomes.

The protein resides in the cytoplasm. It localises to the cytoskeleton. The protein localises to the microtubule organizing center. It is found in the centrosome. Its subcellular location is the centriole. In terms of biological role, participates in the later stages of centriole assembly through the interaction with Ana3 leading to the centriole to centrosome conversion in somatic cells. This Drosophila melanogaster (Fruit fly) protein is Protein PPP1R35 homolog.